The primary structure comprises 491 residues: Glucose-6-phosphate 1-dehydrogenase (491 aa).

NADP(+)-binding residues include arginine 51 and lysine 150. Residues histidine 180, lysine 184, glutamate 218, and aspartate 237 each contribute to the substrate site. Histidine 242 serves as the catalytic Proton acceptor. Substrate is bound at residue lysine 341.

This sequence belongs to the glucose-6-phosphate dehydrogenase family.

The enzyme catalyses D-glucose 6-phosphate + NADP(+) = 6-phospho-D-glucono-1,5-lactone + NADPH + H(+). Its pathway is carbohydrate degradation; pentose phosphate pathway; D-ribulose 5-phosphate from D-glucose 6-phosphate (oxidative stage): step 1/3. Catalyzes the oxidation of glucose 6-phosphate to 6-phosphogluconolactone. In Rhizobium meliloti (strain 1021) (Ensifer meliloti), this protein is Glucose-6-phosphate 1-dehydrogenase.